Here is a 547-residue protein sequence, read N- to C-terminus: Glucose-6-phosphate isomerase (547 aa).

Catalysis depends on glutamate 353, which acts as the Proton donor. Catalysis depends on residues histidine 384 and lysine 512.

The protein belongs to the GPI family.

It localises to the cytoplasm. It catalyses the reaction alpha-D-glucose 6-phosphate = beta-D-fructose 6-phosphate. The protein operates within carbohydrate biosynthesis; gluconeogenesis. It functions in the pathway carbohydrate degradation; glycolysis; D-glyceraldehyde 3-phosphate and glycerone phosphate from D-glucose: step 2/4. Functionally, catalyzes the reversible isomerization of glucose-6-phosphate to fructose-6-phosphate. This chain is Glucose-6-phosphate isomerase, found in Campylobacter jejuni subsp. doylei (strain ATCC BAA-1458 / RM4099 / 269.97).